The sequence spans 1231 residues: Alpha-protein kinase 1 (1231 aa).

Residues Phe61, Gln67, Arg116, 150-153 (RQAR), Asp231, Lys233, 236-237 (ST), and Phe295 contribute to the ADP-D-glycero-beta-D-manno-heptose site. Disordered stretches follow at residues 508-540 (ERVS…RSWT), 609-637 (GSGQ…SSRA), 692-739 (GSNN…GDVP), 767-791 (TFAP…SPSQ), 811-843 (PDGS…DEEG), and 859-888 (AHRP…PIFD). Over residues 509 to 522 (RVSSQDSRSTASSK) the composition is skewed to polar residues. Over residues 524–537 (SKKDQGKLQRERGR) the composition is skewed to basic and acidic residues. Low complexity predominate over residues 700-714 (SSHSCGSDSWSLSSS). A compositionally biased stretch (acidic residues) spans 775–784 (PEGETAESTD). The 221-residue stretch at 1003–1223 (KYSKKSELWT…ICHRLSLTRP (221 aa)) folds into the Alpha-type protein kinase domain.

This sequence belongs to the protein kinase superfamily. Alpha-type protein kinase family. ALPK subfamily. Widely expressed. Expressed in the retina and in sweat glands, especially in the myoepithelial cells.

The protein localises to the cytoplasm. Its subcellular location is the cytosol. It is found in the cytoskeleton. The protein resides in the spindle pole. It localises to the microtubule organizing center. The protein localises to the centrosome. Its subcellular location is the cell projection. It is found in the cilium. It carries out the reaction L-seryl-[protein] + ATP = O-phospho-L-seryl-[protein] + ADP + H(+). It catalyses the reaction L-threonyl-[protein] + ATP = O-phospho-L-threonyl-[protein] + ADP + H(+). With respect to regulation, serine/threonine-protein kinase activity is stimulated upon ADP-D-glycero-beta-D-manno-heptose (ADP-Heptose)-binding. Functionally, serine/threonine-protein kinase that detects bacterial pathogen-associated molecular pattern metabolites (PAMPs) and initiates an innate immune response, a critical step for pathogen elimination and engagement of adaptive immunity. Specifically recognizes and binds ADP-D-glycero-beta-D-manno-heptose (ADP-Heptose), a potent PAMP present in all Gram-negative and some Gram-positive bacteria. ADP-Heptose-binding stimulates its kinase activity to phosphorylate and activate TIFA, triggering pro-inflammatory NF-kappa-B signaling. May be involved in monosodium urate monohydrate (MSU)-induced inflammation by mediating phosphorylation of unconventional myosin MYO9A. May also play a role in apical protein transport by mediating phosphorylation of unconventional myosin MYO1A. May play a role in ciliogenesis. The chain is Alpha-protein kinase 1 from Mus musculus (Mouse).